We begin with the raw amino-acid sequence, 243 residues long: Pyridoxine 5'-phosphate synthase (243 aa).

Asparagine 9 contacts 3-amino-2-oxopropyl phosphate. Residue 11–12 coordinates 1-deoxy-D-xylulose 5-phosphate; the sequence is DH. Residue arginine 20 participates in 3-amino-2-oxopropyl phosphate binding. Residue histidine 45 is the Proton acceptor of the active site. Residues arginine 47 and histidine 52 each contribute to the 1-deoxy-D-xylulose 5-phosphate site. Glutamate 72 acts as the Proton acceptor in catalysis. Threonine 102 is a 1-deoxy-D-xylulose 5-phosphate binding site. Histidine 193 serves as the catalytic Proton donor. Residues glycine 194 and 215–216 contribute to the 3-amino-2-oxopropyl phosphate site; that span reads GH.

This sequence belongs to the PNP synthase family. As to quaternary structure, homooctamer; tetramer of dimers.

Its subcellular location is the cytoplasm. The catalysed reaction is 3-amino-2-oxopropyl phosphate + 1-deoxy-D-xylulose 5-phosphate = pyridoxine 5'-phosphate + phosphate + 2 H2O + H(+). It participates in cofactor biosynthesis; pyridoxine 5'-phosphate biosynthesis; pyridoxine 5'-phosphate from D-erythrose 4-phosphate: step 5/5. Functionally, catalyzes the complicated ring closure reaction between the two acyclic compounds 1-deoxy-D-xylulose-5-phosphate (DXP) and 3-amino-2-oxopropyl phosphate (1-amino-acetone-3-phosphate or AAP) to form pyridoxine 5'-phosphate (PNP) and inorganic phosphate. The sequence is that of Pyridoxine 5'-phosphate synthase from Salmonella typhi.